Reading from the N-terminus, the 779-residue chain is Phosphoribosylformylglycinamidine synthase subunit PurL (779 aa).

The active site involves histidine 52. Tyrosine 55 and lysine 94 together coordinate ATP. Residue glutamate 96 participates in Mg(2+) binding. Residues 97-100 and arginine 119 each bind substrate; that span reads SHNH. The Proton acceptor role is filled by histidine 98. Aspartate 120 serves as a coordination point for Mg(2+). A substrate-binding site is contributed by glutamine 243. Residue aspartate 271 coordinates Mg(2+). 315-317 contacts substrate; that stretch reads ESQ. ATP-binding residues include asparagine 523 and glycine 560. Asparagine 561 is a binding site for Mg(2+). Residue serine 563 coordinates substrate.

The protein belongs to the FGAMS family. In terms of assembly, monomer. Part of the FGAM synthase complex composed of 1 PurL, 1 PurQ and 2 PurS subunits.

Its subcellular location is the cytoplasm. It carries out the reaction N(2)-formyl-N(1)-(5-phospho-beta-D-ribosyl)glycinamide + L-glutamine + ATP + H2O = 2-formamido-N(1)-(5-O-phospho-beta-D-ribosyl)acetamidine + L-glutamate + ADP + phosphate + H(+). It participates in purine metabolism; IMP biosynthesis via de novo pathway; 5-amino-1-(5-phospho-D-ribosyl)imidazole from N(2)-formyl-N(1)-(5-phospho-D-ribosyl)glycinamide: step 1/2. Part of the phosphoribosylformylglycinamidine synthase complex involved in the purines biosynthetic pathway. Catalyzes the ATP-dependent conversion of formylglycinamide ribonucleotide (FGAR) and glutamine to yield formylglycinamidine ribonucleotide (FGAM) and glutamate. The FGAM synthase complex is composed of three subunits. PurQ produces an ammonia molecule by converting glutamine to glutamate. PurL transfers the ammonia molecule to FGAR to form FGAM in an ATP-dependent manner. PurS interacts with PurQ and PurL and is thought to assist in the transfer of the ammonia molecule from PurQ to PurL. The protein is Phosphoribosylformylglycinamidine synthase subunit PurL of Prochlorococcus marinus (strain MIT 9301).